A 599-amino-acid chain; its full sequence is Elongation factor 4 (599 aa).

Residues 4–186 (EHIRNFSIIA…EIVKKIPPPQ (183 aa)) form the tr-type G domain. Residues 16-21 (DHGKST) and 133-136 (NKID) contribute to the GTP site.

Belongs to the TRAFAC class translation factor GTPase superfamily. Classic translation factor GTPase family. LepA subfamily.

Its subcellular location is the cell inner membrane. The enzyme catalyses GTP + H2O = GDP + phosphate + H(+). Required for accurate and efficient protein synthesis under certain stress conditions. May act as a fidelity factor of the translation reaction, by catalyzing a one-codon backward translocation of tRNAs on improperly translocated ribosomes. Back-translocation proceeds from a post-translocation (POST) complex to a pre-translocation (PRE) complex, thus giving elongation factor G a second chance to translocate the tRNAs correctly. Binds to ribosomes in a GTP-dependent manner. The polypeptide is Elongation factor 4 (Geobacter sp. (strain M21)).